A 55-amino-acid chain; its full sequence is Large ribosomal subunit protein eL40 (55 aa).

The protein belongs to the eukaryotic ribosomal protein eL40 family.

This is Large ribosomal subunit protein eL40 from Ignicoccus hospitalis (strain KIN4/I / DSM 18386 / JCM 14125).